The chain runs to 352 residues: Peptide chain release factor 1 (352 aa).

An N5-methylglutamine modification is found at Gln233. Residues Asn288 to Asn309 form a disordered region. A compositionally biased stretch (basic and acidic residues) spans Ala289–Arg306.

The protein belongs to the prokaryotic/mitochondrial release factor family. In terms of processing, methylated by PrmC. Methylation increases the termination efficiency of RF1.

The protein localises to the cytoplasm. Peptide chain release factor 1 directs the termination of translation in response to the peptide chain termination codons UAG and UAA. The sequence is that of Peptide chain release factor 1 (prfA) from Helicobacter pylori (strain ATCC 700392 / 26695) (Campylobacter pylori).